Here is a 435-residue protein sequence, read N- to C-terminus: Adenylosuccinate synthetase (435 aa).

GTP is bound by residues 22 to 28 and 50 to 52; these read GDEGKGK and GHT. The active-site Proton acceptor is Asp23. Mg(2+)-binding residues include Asp23 and Gly50. IMP is bound by residues 23 to 26, 48 to 51, Thr140, Arg154, Gln235, Thr250, and Arg314; these read DEGK and NAGH. The active-site Proton donor is the His51. 310 to 316 is a binding site for substrate; that stretch reads ATTGRKR. Residues Arg316, 342 to 344, and 424 to 426 contribute to the GTP site; these read KLD and SVG.

It belongs to the adenylosuccinate synthetase family. In terms of assembly, homodimer. The cofactor is Mg(2+).

The protein resides in the cytoplasm. It carries out the reaction IMP + L-aspartate + GTP = N(6)-(1,2-dicarboxyethyl)-AMP + GDP + phosphate + 2 H(+). It participates in purine metabolism; AMP biosynthesis via de novo pathway; AMP from IMP: step 1/2. Its function is as follows. Plays an important role in the de novo pathway of purine nucleotide biosynthesis. Catalyzes the first committed step in the biosynthesis of AMP from IMP. The chain is Adenylosuccinate synthetase from Chlorobaculum tepidum (strain ATCC 49652 / DSM 12025 / NBRC 103806 / TLS) (Chlorobium tepidum).